Consider the following 1362-residue polypeptide: MITSNNNNKNNNKKDVEMKSNEEEGDEIFFSILSGDTNNLFKFLNNNNSNNNNNNNNNNINNSIDIYLPYIIVGILEKNKDLLDEDENLKKLFYSPIYSKSIHNINQYQSLNFDHINEFIKDQVRIRKKLNHVNQDKKDTYLDNIDNPKYQFENGDKEVKMKLVLSDIIALLEFSEMQQSLTISKETKYDAPFIDTPIYNNELNLIFPIICYKCLKHIDFNKLTLSILFLNQANYLIKLLLSNNPNEFNEIIEIVISSIGLIGVEKVKRVLLEICKLSKYCSRFIRTELINRQMLPDLVLLITSQFVKDEIDLLSNIISNRIENQWLKEYISQKDQFSTFNEIRDSLFSTLELISKEISSNSNNNSNNLEHSFIVKSIIRLYCGFSGLLGIKMNQQEISISLSFIEKSIFKNYSKIFLCFLLVCEGLVKTIHPKKELVGYLNHLCKVGNCDELLLLISIYFHTHQLQNIALLVKNILGFRPSIHTESLNQIGEILTKEIYTESLVAKRAQQLPIIEKLNTNHQNISIVCVYHLLSERIFEKYETDVGNWCWSQLTKSSTPIHYLLPSLLDQLCKNIIEPSINNNNTSSTTSIINTSTTAAAASTTASNANTTAATTTTTTAATITTATTTGTTTGISPSSSTTTTSSTGGATSTSISSPNSTSLGNSYLFSTFSSTSSSSSSGLPFYMKRISESIIMNSIQQSQSNLSVQILIIYFVLRYNDSVIKFKSEQKGKPIQFLIETTQLREYNIEFLSKLPIQNCINVILSNQSDYFYIIPPFLYLILSQFPQFFNINLLLLEEERLLNPIEKFIYLPNFYSINGGANNNSGGITNEFLKDTLKRTLSQPTSVQLILRYLNTLSVKELLPFTTTLLDNLLPIIIKNRSLPSVSALISPFVEIWERVFPISQSSIALKTINILTCINDDKSTNNNKDLEDYNNNNNNNNDDVKMKDKEKEDKEEEEEEEILLPISNYTYTDIISDPLVIFRSHPTVFTCPPLFKILLQILFFYMVSSKKNLQNQLHTSSGSGSGTTSNVTLNKQQQEDVSTLILTQESTIIQILLEICLIDGIDTKGLNKILRNKNKKFKESYDPVDIEEIRCQICSFIHQMFIDKPLIIKLVHFQGYLSQLLPITVTLIPSMHICFEFIPELLAQPSLEKQIFAIQLLSYLSEKFPIPKSLKICRQSQTRISFNLNSNTLSYDDRIKFLHSILPSITRITKTFPLLAEDFVSILMEQLPNKHNYQQNLKSFISSIDFNLNSNLNNYTNSIYLQNNKNNNNSSNNNNSNNQNDLLNIDIDNNINSNNNNNLRNINFKKVSNDDKSFFSKVSKNESWLSIKENNDPFNIPIEQEIHQAIQIIIKNLSK.

Positions 1-10 are enriched in low complexity; sequence MITSNNNNKN. Disordered stretches follow at residues 1–20, 629–660, and 928–963; these read MITS…EMKS, TTGT…SSPN, and NNNK…EEEE. A compositionally biased stretch (basic and acidic residues) spans 945-955; sequence DDVKMKDKEKE.

It belongs to the Integrator subunit 2 family. In terms of assembly, component of the Integrator complex. The core complex associates with protein phosphatase 2A subunits, to form the Integrator-PP2A (INTAC) complex.

The protein resides in the nucleus. It localises to the cytoplasm. Its function is as follows. Component of the integrator complex, a multiprotein complex that terminates RNA polymerase II (Pol II) transcription in the promoter-proximal region of genes. The integrator complex provides a quality checkpoint during transcription elongation by driving premature transcription termination of transcripts that are unfavorably configured for transcriptional elongation: the complex terminates transcription by (1) catalyzing dephosphorylation of the C-terminal domain (CTD) of Pol II subunit polr2a, (2) degrading the exiting nascent RNA transcript via endonuclease activity and (3) promoting the release of Pol II from bound DNA. The integrator complex is also involved in terminating the synthesis of non-coding Pol II transcripts, such as enhancer RNAs (eRNAs), small nuclear RNAs (snRNAs), telomerase RNAs and long non-coding RNAs (lncRNAs). The sequence is that of Integrator complex subunit 2 homolog (ints2) from Dictyostelium discoideum (Social amoeba).